The following is a 1215-amino-acid chain: DNA-directed RNA polymerase subunit beta' (1215 aa).

4 residues coordinate Zn(2+): C60, C62, C75, and C78. Positions 450, 452, and 454 each coordinate Mg(2+). Zn(2+) contacts are provided by C818, C892, C899, and C902.

It belongs to the RNA polymerase beta' chain family. In terms of assembly, the RNAP catalytic core consists of 2 alpha, 1 beta, 1 beta' and 1 omega subunit. When a sigma factor is associated with the core the holoenzyme is formed, which can initiate transcription. Requires Mg(2+) as cofactor. Zn(2+) serves as cofactor.

The enzyme catalyses RNA(n) + a ribonucleoside 5'-triphosphate = RNA(n+1) + diphosphate. DNA-dependent RNA polymerase catalyzes the transcription of DNA into RNA using the four ribonucleoside triphosphates as substrates. This is DNA-directed RNA polymerase subunit beta' from Streptococcus sanguinis (strain SK36).